The primary structure comprises 245 residues: Heavy metal-associated isoprenylated plant protein 1 (245 aa).

The region spanning 28–92 is the HMA 1 domain; the sequence is PVHVVLKIDF…KLQKKSKKKV (65 aa). Residues Cys39 and Cys42 each coordinate a metal cation. The interval 91–113 is disordered; sequence KVELISPKPKKDTKENNEKKAND. Over residues 99–113 the composition is skewed to basic and acidic residues; that stretch reads PKKDTKENNEKKAND. The HMA 2 domain maps to 121 to 188; it reads VTTVVLKVNC…KLKKTVQVVP (68 aa). A metal cation-binding residues include Cys132 and Cys135. Cys242 is subject to Cysteine methyl ester. Cys242 is lipidated: S-farnesyl cysteine. A propeptide spans 243–245 (removed in mature form); it reads SVM.

The protein belongs to the HIPP family.

In terms of biological role, heavy-metal-binding protein. This is Heavy metal-associated isoprenylated plant protein 1 from Arabidopsis thaliana (Mouse-ear cress).